Reading from the N-terminus, the 440-residue chain is Protein C-ets-1 (440 aa).

Lysine 8 and lysine 15 each carry N6-acetyllysine; alternate. Glycyl lysine isopeptide (Lys-Gly) (interchain with G-Cter in SUMO2); alternate cross-links involve residues lysine 8 and lysine 15. Lysine 15 is covalently cross-linked (Glycyl lysine isopeptide (Lys-Gly) (interchain with G-Cter in SUMO); alternate). Position 38 is a phosphothreonine; by MAPK (threonine 38). A PNT domain is found at 51–136; it reads ATFSGFTKEQ…EHLEILQKED (86 aa). Positions 130-243 are activation domain; required for transcription activation; that stretch reads EILQKEDVKP…DNMCLGRASR (114 aa). Residue lysine 138 forms a Glycyl lysine isopeptide (Lys-Gly) (interchain with G-Cter in SUMO2) linkage. Tyrosine 223 is subject to Phosphotyrosine. Lysine 227 participates in a covalent cross-link: Glycyl lysine isopeptide (Lys-Gly) (interchain with G-Cter in SUMO). At serine 251 the chain carries Phosphoserine; by CaMK2. The residue at position 254 (serine 254) is a Phosphoserine. Threonine 265 carries the post-translational modification Phosphothreonine. Phosphoserine occurs at positions 267 and 270. Serine 282 and serine 285 each carry phosphoserine; by CaMK2. The segment at 304 to 312 is helix HI-1; sequence FKDYVRDRA. Lysine 305 carries the N6-acetyllysine modification. Positions 323-330 are helix HI-2; sequence AAALAGYT. The ETS DNA-binding region spans 335-415; it reads IQLWQFLLEL…AGKRYVYRFV (81 aa). The tract at residues 418-422 is helix H4; sequence LQSLL. The segment at 426–432 is helix H5; that stretch reads PEELHAM.

It belongs to the ETS family. As to quaternary structure, binds DNA as a homodimer; homodimerization is required for transcription activation. Interacts with MAF and MAFB. Interacts with PAX5; the interaction alters DNA-binding properties. Interacts with DAXX. Interacts with UBE2I. Interacts with SP100; the interaction is direct and modulates ETS1 transcriptional activity. Phosphorylation at Ser-251, Ser-282 and Ser-285 by CaMK2/CaMKII in response to calcium signaling decreases affinity for DNA: an increasing number of phosphoserines causes DNA-binding to become progressively weaker. Post-translationally, sumoylated on Lys-15 and Lys-227, preferentially with SUMO2; which inhibits transcriptional activity. In terms of processing, ubiquitinated; which induces proteasomal degradation.

Its subcellular location is the nucleus. The protein localises to the cytoplasm. Autoinhibited by a module composed of four alpha helices (HI-1, HI-2, H4, and H5) that flank the DNA-binding ETS domain, reducing the affinity for DNA. Phosphorylation by CaMK2/CaMKII in response to calcium signaling decreases affinity for DNA. Functionally, transcription factor. Directly controls the expression of cytokine and chemokine genes in a wide variety of different cellular contexts. May control the differentiation, survival and proliferation of lymphoid cells. May also regulate angiogenesis through regulation of expression of genes controlling endothelial cell migration and invasion. This is Protein C-ets-1 (Ets1) from Mus musculus (Mouse).